The sequence spans 497 residues: B3 domain-containing protein REM1 (497 aa).

3 consecutive DNA-binding regions (TF-B3) follow at residues 7–92, 142–239, and 278–379; these read PSLF…SSES, FLRA…LCSH, and FLTQ…HSKI. The tract at residues 87–135 is disordered; the sequence is AVSSESDDDESDDTDDSESDDESNDTDDSESDDSEDNGEGDSSLVNKEA. A compositionally biased stretch (acidic residues) spans 91-125; that stretch reads ESDDDESDDTDDSESDDESNDTDDSESDDSEDNGE.

In terms of tissue distribution, specifically expressed in the reproductive meristem.

Its subcellular location is the nucleus. May play a role in flower development. The polypeptide is B3 domain-containing protein REM1 (REM1) (Brassica oleracea var. botrytis (Cauliflower)).